The sequence spans 509 residues: Cytochrome P450 monooxygenase cpaH (509 aa).

Residue asparagine 15 is glycosylated (N-linked (GlcNAc...) asparagine). The helical transmembrane segment at 31–51 (TTILLIGVTYCILVGIYRVTL) threads the bilayer. Residues asparagine 306 and asparagine 412 are each glycosylated (N-linked (GlcNAc...) asparagine). Cysteine 453 is a binding site for heme.

This sequence belongs to the cytochrome P450 family. It depends on heme as a cofactor.

Its subcellular location is the membrane. It functions in the pathway secondary metabolite biosynthesis. In terms of biological role, cytochrome P450 monooxygenase; part of the gene cluster that mediates the biosynthesis of the fungal neurotoxin cyclopiazonic acid (CPA), a nanomolar inhibitor of Ca(2+)-ATPase with a unique pentacyclic indole tetramic acid scaffold. The hybrid two module polyketide synthase-nonribosomal peptide synthetase (PKS-NRPS) cpaS incorporates acetyl-CoA, malonyl-CoA, and tryptophan (Trp) and utilizes a C-terminal redox-incompetent reductase domain to make and release the tryptophan tetramic acid, cyclo-acetoacetyl-L-tryptophan (c-AATrp), as the first intermediate in the pathway. CpaS catalyzes a Dieckmann-type cyclization on the N-acetoacetyl-Trp intermediate bound in thioester linkage to the phosphopantetheinyl arm of the T domain to form and release c-AATrp. CpaD then regiospecifically dimethylallylates c-AATrp to form beta-cyclopiazonic acid. CpaD discriminates against free Trp but accepts tryptophan-containing thiohydantoins, diketopiperazines, and linear peptides as substrates for C4-prenylation and also acts as a regiospecific O-dimethylallyltransferase (DMAT) on a tyrosine-derived tetramic acid. The beta-cyclopiazonate dehydrogenase cpaO then carries out the dehydrogenation of beta-CPA to yield an unstable enimine product, which is captured by intramolecular cyclization to create the pentacyclic fused scaffold of alpha-cyclopiazonate. Finally, the cytochrome P450 monooxygenase cpaH mediates the conversion of CPA into the less toxic 2-oxocyclopiazonic acid, the end product of the CPA pathway in A.oryza. This Aspergillus oryzae (Yellow koji mold) protein is Cytochrome P450 monooxygenase cpaH.